The primary structure comprises 445 residues: GRAM domain-containing protein 2B (445 aa).

An N-acetylmethionine modification is found at Met-1. The span at 1-10 (MVKKPISSSD) shows a compositional bias: polar residues. The segment at 1-119 (MVKKPISSSD…RKKSSSSSQY (119 aa)) is disordered. Low complexity predominate over residues 18 to 37 (PSSPKSSAGASHSSTDSPSS). Polar residues-rich tracts occupy residues 56-68 (KSPTAQSPTSSVE) and 82-93 (SKSSFDGSNLLS). A compositionally biased stretch (basic and acidic residues) spans 94–112 (DKNDCKTESKADSKTERKK). A GRAM domain is found at 123-190 (MHFHKLFLDV…FSVTLIKKTK (68 aa)). 3 positions are modified to phosphoserine: Ser-238, Ser-255, and Ser-265. The segment at 277-331 (DLEGYSSSGSQTPESENSRDFHVTESQTVLNVTKGETKPPRTDAHGSRAPDGKAK) is disordered. Positions 281-291 (YSSSGSQTPES) are enriched in polar residues. Residues 311-330 (GETKPPRTDAHGSRAPDGKA) show a composition bias toward basic and acidic residues.

The sequence is that of GRAM domain-containing protein 2B (Gramd2b) from Rattus norvegicus (Rat).